We begin with the raw amino-acid sequence, 304 residues long: Ornithine carbamoyltransferase (304 aa).

Carbamoyl phosphate-binding positions include 53–56, Gln80, Arg104, and 131–134; these read STRT and HPCQ. Residues Asn162, Asp219, and 223 to 224 each bind L-ornithine; that span reads SM. Residues 259–260 and Arg287 each bind carbamoyl phosphate; that span reads CL.

Belongs to the aspartate/ornithine carbamoyltransferase superfamily. OTCase family.

It is found in the cytoplasm. The catalysed reaction is carbamoyl phosphate + L-ornithine = L-citrulline + phosphate + H(+). It functions in the pathway amino-acid biosynthesis; L-arginine biosynthesis; L-arginine from L-ornithine and carbamoyl phosphate: step 1/3. Reversibly catalyzes the transfer of the carbamoyl group from carbamoyl phosphate (CP) to the N(epsilon) atom of ornithine (ORN) to produce L-citrulline. The polypeptide is Ornithine carbamoyltransferase (Nitrosococcus oceani (strain ATCC 19707 / BCRC 17464 / JCM 30415 / NCIMB 11848 / C-107)).